The chain runs to 226 residues: Large ribosomal subunit protein uL1 (226 aa).

It belongs to the universal ribosomal protein uL1 family. As to quaternary structure, part of the 50S ribosomal subunit.

Binds directly to 23S rRNA. The L1 stalk is quite mobile in the ribosome, and is involved in E site tRNA release. In terms of biological role, protein L1 is also a translational repressor protein, it controls the translation of the L11 operon by binding to its mRNA. The chain is Large ribosomal subunit protein uL1 from Borrelia garinii subsp. bavariensis (strain ATCC BAA-2496 / DSM 23469 / PBi) (Borreliella bavariensis).